The sequence spans 248 residues: Isoprenyl transferase (248 aa).

Residue Asp23 is part of the active site. Position 23 (Asp23) interacts with Mg(2+). Substrate is bound by residues 24–27 (GNGR), Trp28, Arg36, His40, and 68–70 (STE). The active-site Proton acceptor is Asn71. Residues Trp72, Arg74, Arg185, and 191–193 (RIS) each bind substrate. Residue Glu204 participates in Mg(2+) binding.

It belongs to the UPP synthase family. As to quaternary structure, homodimer. The cofactor is Mg(2+).

Catalyzes the condensation of isopentenyl diphosphate (IPP) with allylic pyrophosphates generating different type of terpenoids. In Neisseria meningitidis serogroup B (strain ATCC BAA-335 / MC58), this protein is Isoprenyl transferase.